The sequence spans 133 residues: MAAFNLALYLSKSIPGVGVLGGVIGGSAALAKNLKAKQRGEITTEEAVIDTGKEALGAGLATTVSAYAAGVVGGGLVVSLGTAFAVAVAGKYAWDYGMEQMEAKLQEKKHQEQGGQTYGDNPDPFDPQELETP.

Residues 1–5 (MAAFN) are Cytoplasmic-facing. The chain crosses the membrane as a helical span at residues 6–26 (LALYLSKSIPGVGVLGGVIGG). Over 27–67 (SAALAKNLKAKQRGEITTEEAVIDTGKEALGAGLATTVSAY) the chain is Lumenal. Positions 37-57 (KQRGEITTEEAVIDTGKEALG) are magnetite interacting component (MIC) binds magnetite. A helical membrane pass occupies residues 68 to 88 (AAGVVGGGLVVSLGTAFAVAV). Topologically, residues 89–133 (AGKYAWDYGMEQMEAKLQEKKHQEQGGQTYGDNPDPFDPQELETP) are cytoplasmic. Positions 105 to 133 (LQEKKHQEQGGQTYGDNPDPFDPQELETP) are disordered.

The protein belongs to the magnetosome MamC family. As to quaternary structure, probably interacts with MamA.

The protein localises to the magnetosome membrane. Its function is as follows. Probably helps control the size of magnetite crystals; in vitro synthesis of magnetite yields larger and more well-developed magnetite crystals in the presence of purified MamC. Binds Fe(3+). The lumenal domain probably binds magnetite crystals, affecting crystal size and shape. Purified MamC self-assembles into micelles in the presence of ferric chloride hexahydrate (FeCl(3).6H(2)O); both oxygen and iron are present in the proteinaceous micelles. Whether this is relevant in vivo is unknown. This Magnetococcus marinus (strain ATCC BAA-1437 / JCM 17883 / MC-1) protein is Magnetosome protein MamC.